A 202-amino-acid chain; its full sequence is Coiled-coil domain-containing protein 85B (202 aa).

N-acetylmethionine is present on Met1. 2 coiled-coil regions span residues 44–82 (RLMQEVNRQLQGHLGEIRELKQLNRRLQAENRELRDLCC) and 118–141 (QKLAELEGRQEELLRENLALKELC). Residues 152-162 (GGPGGAVGSGA) show a composition bias toward gly residues. Residues 152–202 (GGPGGAVGSGAGPTPELALPPCGPRDLGDGSSSTGSVGSPDQLPLACSPDD) are disordered. The segment covering 180–190 (DGSSSTGSVGS) has biased composition (low complexity).

This sequence belongs to the CCDC85 family. As to quaternary structure, interacts with CEBPB. May interact with CEBPD. Interacts with EURL. Interacts with MCRS1. Interacts with TCF7L2; competes with CTNNB1. Interacts with ANKRD26. Interacts with the beta-catenin family proteins ARVCF, CTNND1, CTNND2 and PKP4. Expressed in white and brown adipose tissue.

It localises to the nucleus. It is found in the cytoplasm. Its subcellular location is the cytoskeleton. The protein localises to the microtubule organizing center. The protein resides in the centrosome. It localises to the cell junction. It is found in the adherens junction. Functionally, functions as a transcriptional repressor. May inhibit the activity of CTNNB1 in a TP53-dependent manner and thus regulate cell growth. May function in adipocyte differentiation, negatively regulating mitotic clonal expansion. Plays a role in cell-cell adhesion and epithelium development through its interaction with proteins of the beta-catenin family. The protein is Coiled-coil domain-containing protein 85B (Ccdc85b) of Mus musculus (Mouse).